Here is a 53-residue protein sequence, read N- to C-terminus: Large ribosomal subunit protein eL40 (53 aa).

Belongs to the eukaryotic ribosomal protein eL40 family.

This chain is Large ribosomal subunit protein eL40, found in Pyrobaculum islandicum (strain DSM 4184 / JCM 9189 / GEO3).